The primary structure comprises 156 residues: MPRKGNVPKREVLADPIHGSMVVAKLINSVMLDGKKGTAQNIVYGAFDIIKERAEENPVEVFEKAMNNIMPVLEVKARRVGGANYQVPIEVRPERRQTLGLRWLVKYTRARGEKGMIEKLAKEIMDAANNTGSSVKKKEDTHKMAEANKAFAHYRW.

It belongs to the universal ribosomal protein uS7 family. Part of the 30S ribosomal subunit. Contacts proteins S9 and S11.

Functionally, one of the primary rRNA binding proteins, it binds directly to 16S rRNA where it nucleates assembly of the head domain of the 30S subunit. Is located at the subunit interface close to the decoding center, probably blocks exit of the E-site tRNA. The protein is Small ribosomal subunit protein uS7 of Alkaliphilus metalliredigens (strain QYMF).